A 181-amino-acid polypeptide reads, in one-letter code: Inner membrane-spanning protein YciB (181 aa).

Helical transmembrane passes span 3–23 (LLFD…FGIY), 54–74 (SLAI…PWFI), 81–101 (IYWL…KPLI), 119–139 (LNLA…YVAY), and 149–169 (FKLF…AFYL).

The protein belongs to the YciB family.

The protein resides in the cell inner membrane. Its function is as follows. Plays a role in cell envelope biogenesis, maintenance of cell envelope integrity and membrane homeostasis. The sequence is that of Inner membrane-spanning protein YciB from Legionella pneumophila subsp. pneumophila (strain Philadelphia 1 / ATCC 33152 / DSM 7513).